A 638-amino-acid polypeptide reads, in one-letter code: Growth hormone receptor (638 aa).

Residues 1-18 form the signal peptide; the sequence is MDLWQLLLTVALAGSSDA. The Extracellular portion of the chain corresponds to 19–264; sequence FSGSEATPAT…SPFTCEEDFR (246 aa). Residues 30–51 form a disordered region; it reads GRASESVQRVHPGLGTNSSGKP. N-linked (GlcNAc...) asparagine glycosylation occurs at Asn46. Disulfide bonds link Cys56–Cys66 and Cys101–Cys112. Asn115 carries N-linked (GlcNAc...) asparagine glycosylation. Cys126 and Cys140 are oxidised to a cystine. Positions 151-254 constitute a Fibronectin type-III domain; that stretch reads PPIGLNWTLL…EVLYVTLPQM (104 aa). N-linked (GlcNAc...) asparagine glycosylation is found at Asn156, Asn161, and Asn200. A WSXWS motif motif is present at residues 240-244; the sequence is YGEFS. Positions 260-262 are required for ADAM17-mediated proteolysis; it reads EED. The helical transmembrane segment at 265 to 288 threads the bilayer; it reads FPWFLIIIFGIFGLTVMLFVFIFS. At 289 to 638 the chain is on the cytoplasmic side; sequence KQQRIKMLIL…STDQLNKILP (350 aa). The segment at 294 to 379 is required for JAK2 binding; the sequence is KMLILPPVPV…HQKSLSVLAA (86 aa). The short motif at 297 to 305 is the Box 1 motif element; it reads ILPPVPVPK. The UbE motif signature appears at 340–349; sequence DSWVEFIELD. Ser341 is modified (phosphoserine). Tyr487 is modified (phosphotyrosine). Residues 573–592 are disordered; that stretch reads TTTAERSGTAEDAPGSEMPV. Residue Tyr595 is modified to Phosphotyrosine.

Belongs to the type I cytokine receptor family. Type 1 subfamily. As to quaternary structure, on growth hormone (GH) binding, forms homodimers and binds JAK2 via a box 1-containing domain. The soluble form (GHBP) is produced by phorbol ester-promoted proteolytic cleavage at the cell surface (shedding) by ADAM17/TACE. Shedding is inhibited by growth hormone (GH) binding to the receptor probably due to a conformational change in GHR rendering the receptor inaccessible to ADAM17. In terms of processing, on GH binding, phosphorylated on tyrosine residues in the cytoplasmic domain by JAK2. Post-translationally, ubiquitinated by the ECS(SOCS2) complex following ligand-binding and phosphorylation by JAK2, leading to its degradation by the proteasome. Regulation by the ECS(SOCS2) complex acts as a negative feedback loop of growth hormone receptor signaling. Ubiquitination is not sufficient for GHR internalization.

The protein localises to the cell membrane. The protein resides in the secreted. Receptor for pituitary gland growth hormone involved in regulating postnatal body growth. On ligand binding, couples to, and activates the JAK2/STAT5 pathway. Functionally, the soluble form acts as a reservoir of growth hormone in plasma and may be a modulator/inhibitor of GH signaling. This Oryctolagus cuniculus (Rabbit) protein is Growth hormone receptor.